A 504-amino-acid chain; its full sequence is Probable cytochrome P450 513F1 (504 aa).

A helical membrane pass occupies residues 1 to 21 (MILSLLFLFVITLYFLIPSRI). Residue C449 coordinates heme.

The protein belongs to the cytochrome P450 family. The cofactor is heme.

It is found in the membrane. The chain is Probable cytochrome P450 513F1 (cyp513F1) from Dictyostelium discoideum (Social amoeba).